An 859-amino-acid chain; its full sequence is MALLSSSLSSQIPTGAHHLTLNAYANTQCIPHFFSTLNAGTSAGKRSSLYLRWGKGSNKIIACVGEDSLSAPTLVKREFPPGFWKDHVIDSLTSSHKVAASDEKRIETLISEIKNMFRSMGYGDTNPSAYDTAWVARIPAVDGSEQPEFPETLEWILQNQLKDGSWGEGFYFLAYDRILATLACIITLTLWRTGEIQVQKGIEFFKTQAGKIEDEADSHRPSGFEIVFPAMLKEAKVLGLDLPYELPFIKQIIEKREAKLERLPTNILYALPTTLLYSLEGLQEIVDWQKIIKLQSKDGSFLSSPASTAAVFMRTGNKKCLEFLNFVLKKFGNHVPCHYPLDLFERLWAVDTIERLGIDRHFKEEIKDALDYVYSHWDERGIGWARENPVPDIDDTAMGLRILRLHGYNVSSDVLKTFRDENGEFFCFLGQTQRGVTDMLNVNRCSHVAFPGETIMEEAKTCTERYLRNALEDVGAFDKWALKKNIRGEVEYALKYPWHRSMPRLEARSYIEHYGPNDVWLGKTMYMMPYISNEKYLELAKLDFNHVQSLHQKELRDLRRWWTSSGFTELKFTRERVTEIYFSPASFMFEPEFATCRAVYTKTSNFTVILDDLYDAHGTLDDLKLFSDSVKKWDLSLVDRMPQDMKICFMGFYNTFNEIAEEGRKRQGRDVLGYIRNVWEIQLEAYTKEAEWSAARYVPSFDEYIDNASVSIALGTVVLISALFTGEILTDDVLSKIGRGSRFLQLMGLTGRLVNDTKTYEAERGQGEVASAVQCYMKDHPEISEEEALKHVYTVMENALDELNREFVNNREVPDSCRRLVFETARIMQLFYMDGDGLTLSHETEIKEHVKNCLFQPVA.

The N-terminal 70 residues, M1–S70, are a transit peptide targeting the chloroplast. K259 is a substrate binding site. The Mg(2+) site is built by D392 and D394. The short motif at D392–D395 is the DXDD motif element. K479 provides a ligand contact to substrate. Mg(2+) contacts are provided by D611, D615, N755, T759, and E763. Positions D611–D615 match the DDXXD motif motif.

The protein belongs to the terpene synthase family. Tpsd subfamily. The cofactor is Mg(2+).

It is found in the plastid. Its subcellular location is the chloroplast. The enzyme catalyses (2E,6E,10E)-geranylgeranyl diphosphate = (+)-copalyl diphosphate. It carries out the reaction (+)-copalyl diphosphate = abieta-8(14),12-diene + diphosphate. The protein operates within terpene metabolism; oleoresin biosynthesis. Involved in defensive oleoresin formation in conifers in response to insect attack or other injury. Involved in diterpene (C20) olefins biosynthesis. Bifunctional enzyme that catalyzes two sequential cyclizations of geranylgeranyl diphosphate (GGPP) to levopimaradiene. Levopimaradiene is the major products of the enzyme followed by abietadiene, neoabietadiene and palustradiene. The protein is Bifunctional levopimaradiene synthase, chloroplastic (TPS-LAS) of Picea abies (Norway spruce).